A 335-amino-acid polypeptide reads, in one-letter code: Tetraacyldisaccharide 4'-kinase (335 aa).

Residue 58-65 participates in ATP binding; it reads TVGGNGKT.

This sequence belongs to the LpxK family.

It catalyses the reaction a lipid A disaccharide + ATP = a lipid IVA + ADP + H(+). Its pathway is glycolipid biosynthesis; lipid IV(A) biosynthesis; lipid IV(A) from (3R)-3-hydroxytetradecanoyl-[acyl-carrier-protein] and UDP-N-acetyl-alpha-D-glucosamine: step 6/6. Functionally, transfers the gamma-phosphate of ATP to the 4'-position of a tetraacyldisaccharide 1-phosphate intermediate (termed DS-1-P) to form tetraacyldisaccharide 1,4'-bis-phosphate (lipid IVA). This chain is Tetraacyldisaccharide 4'-kinase, found in Dichelobacter nodosus (strain VCS1703A).